We begin with the raw amino-acid sequence, 145 residues long: Hemoglobin subunit beta-1 (145 aa).

The Globin domain maps to 1-145 (TFTNDESQHI…VEAALATGYH (145 aa)). The heme b site is built by histidine 62 and histidine 91.

Belongs to the globin family. As to quaternary structure, major hemoglobin is a tetramer of two alpha-1 chains and two beta-1 chains. In terms of tissue distribution, red blood cells.

In terms of biological role, involved in oxygen transport from the lung to the various peripheral tissues. In Triturus cristatus (Great crested newt), this protein is Hemoglobin subunit beta-1 (HBB1).